The sequence spans 1174 residues: Male determiner protein Mdmd(V) (1174 aa).

Basic and acidic residues predominate over residues 1 to 15; that stretch reads MNATDAESRKPENKP. Disordered stretches follow at residues 1–51, 79–110, and 136–259; these read MNAT…SGQR, RKDG…PVEL, and KQLS…LRRS. Residues 16 to 35 show a composition bias toward low complexity; it reads SSESSSSGSTSGSSDGEVSS. The segment covering 36–47 has biased composition (polar residues); that stretch reads KTYFKNNKSKVL. Positions 79 to 92 are enriched in basic and acidic residues; that stretch reads RKDGSNEMLPKEDS. Positions 93-102 are enriched in polar residues; that stretch reads INTNHNYTTD. Residues 138–153 show a composition bias toward low complexity; that stretch reads LSAYRSRSRSTRLSYS. The span at 167 to 180 shows a compositional bias: basic residues; that stretch reads SRYKKSVLRSRRTS. The segment covering 183–200 has biased composition (basic and acidic residues); sequence HGRDSSTTKRSVSRDKDN. Residues 201–223 show a composition bias toward basic residues; the sequence is RLRRRIGSSRSHTRSHSRFRRSE. Residues 235–259 show a composition bias toward basic and acidic residues; sequence RSQERRHERRRSMSSDYERIALRRS. In terms of domain architecture, MIF4G spans 348–531; that stretch reads KKYIHGYINK…KVLFQVRRDG (184 aa). Over residues 597–608 the composition is skewed to low complexity; that stretch reads DSDGSFGSGSNS. The interval 597–616 is disordered; sequence DSDGSFGSGSNSETALSDCD. An MI domain is found at 641–757; it reads ALRRTIYLTL…SWDVLDCIKL (117 aa). The span at 840–857 shows a compositional bias: low complexity; sequence SAPSSSSSSSLSSELSAP. Disordered regions lie at residues 840 to 1045 and 1095 to 1133; these read SAPS…SRTK and RKDN…NHSR. The span at 869–909 shows a compositional bias: basic residues; it reads KKKHKGKNKKMTKKKNPSKKKEKTKKIVGKNKIAAKNKTIK. Residues 910 to 924 show a composition bias toward basic and acidic residues; it reads RRTDKDNSSSKDNFL. Low complexity predominate over residues 926–957; the sequence is SESSSNESISLDSLSSELFAPSSYSSSESSND. Residues 963–1001 show a composition bias toward basic residues; that stretch reads KHKGKNKKMTKKKNPSNKREKTKKKLSKNKKAPNKNTKK. The segment covering 1010–1020 has biased composition (low complexity); the sequence is SSESSISESKS. A compositionally biased stretch (basic residues) spans 1034 to 1045; the sequence is RKKRVTSKSRTK. Positions 1095–1118 are enriched in basic and acidic residues; it reads RKDNYGNRQNHEISQRHDSEIKRR. Residues 1119 to 1130 are compositionally biased toward basic residues; it reads REERKKRHHEKN.

It belongs to the CWC22 family. Component of the spliceosome C complex.

It localises to the nucleus speckle. Male determiner protein (M-factor) that controls male somatic sexual differentiation. Acts as a dominant factor that regulates the mRNA splicing of transformer (tra) and doublesex (dsx) transcripts and promotes expression of male splice forms of tra and dsx. Probably acts as a component of the spliceosome C complex required for mRNA splicing factor and exon-junction complex (EJC) assembly. Hinders eIF4AIII from non-specifically binding RNA and escorts it to the splicing machinery to promote EJC assembly on mature mRNAs. The sequence is that of Male determiner protein Mdmd(V) from Musca domestica (House fly).